A 394-amino-acid chain; its full sequence is Dimethyladenosine transferase 2, mitochondrial (394 aa).

The transit peptide at 1–19 (MWVPGAGIPSRLTLSAFTR) directs the protein to the mitochondrion. S-adenosyl-L-methionine is bound by residues V75, E123, and D149. The tract at residues 326-327 (KR) is DNA-binding.

Belongs to the class I-like SAM-binding methyltransferase superfamily. rRNA adenine N(6)-methyltransferase family. KsgA subfamily. As to quaternary structure, homodimer. Component of the mitochondrial transcription initiation complex, composed at least of TFB2M, TFAM and POLRMT. In this complex TFAM recruits POLRMT to the promoter whereas TFB2M induces structural changes in POLRMT to enable promoter opening and trapping of the DNA non-template strand. Interacts with mitochondrial RNA polymerase POLRMT. Interacts with TFAM.

The protein resides in the mitochondrion. It carries out the reaction adenosine in rRNA + S-adenosyl-L-methionine = N(6)-methyladenosine in rRNA + S-adenosyl-L-homocysteine + H(+). S-adenosyl-L-methionine-dependent rRNA methyltransferase which may methylate two specific adjacent adenosines in the loop of a conserved hairpin near the 3'-end of 12S mitochondrial rRNA. Component of the mitochondrial transcription initiation complex, composed at least of TFB2M, TFAM and POLRMT that is required for basal transcription of mitochondrial DNA. In this complex TFAM recruits POLRMT to a specific promoter whereas TFB2M induces structural changes in POLRMT to enable promoter opening and trapping of the DNA non-template strand. Stimulates transcription independently of the methyltransferase activity. This chain is Dimethyladenosine transferase 2, mitochondrial, found in Bos taurus (Bovine).